The sequence spans 850 residues: MSARPFADLRERLKSGRASLAAAYREKPRAAHYLARHAALVDALLAELSTRLGLARGICLVAVGGYGRGELFPGSDVDVMLLLPAEPLEAERQALESWVQACWDVGLEIGHSVRTVDACLAEADADITVETNLLEARRVWGATALFDDFGRRFRARFDAQRFFDGKLAEQHARHARFDDSAYKLEPNLKDSPGGLRDLHTIHWLAQACDIDAGWSGIARAGLLTEGEARRVAREERWLAKLRIHLHLLAGRREDRLAFDYQSELAACLGLAPTAHRRAGERLMQGYFRAAKLVQRANDILIQSLRVRLFPVVAPPLPIDDDFQLRAGLLEARDPDVFLRKPDALLRAFLVYARHPQLAGFEPTTLRAVWRASARVDRAFRATPAHRALFIALLREPLGVTRALRAMHRYGLLGRYIPAFGRIVGQMQHDLFHVYTVDEHILTVLRNLRRFTVAQLAHEFPLASRLIAAFDKPELLYLAALFHDIAKGRGGDHSALGALDARGFCRQHGLDKTDTDLVAWLVDMHLVMSRTSQKEDISDPKVIAAFAARVGDTRRLDALYLLTVADIRGTSPTVWNAWKGKLLEDLYHAAFARLQGADLAIAGIAARREEARVNLALYGLPRDAADALWRHLDKAYFARFDARDMAWHARMLWRRDATAGAVVRARLSPAGEGIQVMVYAPDRPDIFVRICAFFARIQYTVLEAKIHTTRNGYALDSFQVMDLAHRNIHYRDFLAFVEYELARDLDPARPLQAVQPGRLSRHQRHHPYPAAVHLEADRGGDGQVLSITCADRGGLLFAIAEELMRHEISVYAAKIDTLGERVEDTFLIRGERLNAPPERAALENELRGVLG.

The uridylyltransferase stretch occupies residues 1–317 (MSARPFADLR…LFPVVAPPLP (317 aa)). The uridylyl-removing stretch occupies residues 318-673 (IDDDFQLRAG…ARLSPAGEGI (356 aa)). The region spanning 436-558 (VDEHILTVLR…VGDTRRLDAL (123 aa)) is the HD domain. ACT domains are found at residues 674-755 (QVMV…AVQP) and 783-850 (VLSI…GVLG).

It belongs to the GlnD family. The cofactor is Mg(2+).

It catalyses the reaction [protein-PII]-L-tyrosine + UTP = [protein-PII]-uridylyl-L-tyrosine + diphosphate. The catalysed reaction is [protein-PII]-uridylyl-L-tyrosine + H2O = [protein-PII]-L-tyrosine + UMP + H(+). With respect to regulation, uridylyltransferase (UTase) activity is inhibited by glutamine, while glutamine activates uridylyl-removing (UR) activity. Modifies, by uridylylation and deuridylylation, the PII regulatory proteins (GlnB and homologs), in response to the nitrogen status of the cell that GlnD senses through the glutamine level. Under low glutamine levels, catalyzes the conversion of the PII proteins and UTP to PII-UMP and PPi, while under higher glutamine levels, GlnD hydrolyzes PII-UMP to PII and UMP (deuridylylation). Thus, controls uridylylation state and activity of the PII proteins, and plays an important role in the regulation of nitrogen assimilation and metabolism. This Thiobacillus denitrificans (strain ATCC 25259 / T1) protein is Bifunctional uridylyltransferase/uridylyl-removing enzyme.